The sequence spans 150 residues: SsrA-binding protein (150 aa).

It belongs to the SmpB family.

It localises to the cytoplasm. Functionally, required for rescue of stalled ribosomes mediated by trans-translation. Binds to transfer-messenger RNA (tmRNA), required for stable association of tmRNA with ribosomes. tmRNA and SmpB together mimic tRNA shape, replacing the anticodon stem-loop with SmpB. tmRNA is encoded by the ssrA gene; the 2 termini fold to resemble tRNA(Ala) and it encodes a 'tag peptide', a short internal open reading frame. During trans-translation Ala-aminoacylated tmRNA acts like a tRNA, entering the A-site of stalled ribosomes, displacing the stalled mRNA. The ribosome then switches to translate the ORF on the tmRNA; the nascent peptide is terminated with the 'tag peptide' encoded by the tmRNA and targeted for degradation. The ribosome is freed to recommence translation, which seems to be the essential function of trans-translation. The protein is SsrA-binding protein of Campylobacter jejuni subsp. jejuni serotype O:6 (strain 81116 / NCTC 11828).